The chain runs to 93 residues: Large ribosomal subunit protein bL27 (93 aa).

A propeptide spanning residues 1-8 (MIMDLQFF) is cleaved from the precursor. The interval 8 to 29 (FSHHKGGGSTANGRNSAGRRLG) is disordered.

This sequence belongs to the bacterial ribosomal protein bL27 family. The N-terminus is cleaved by ribosomal processing cysteine protease Prp.

The chain is Large ribosomal subunit protein bL27 from Limosilactobacillus fermentum (strain NBRC 3956 / LMG 18251) (Lactobacillus fermentum).